The following is a 498-amino-acid chain: Angiopoietin-1 (498 aa).

A signal peptide spans 1-19 (MTVFLSFAFFAAILTHIGC). Positions 81–119 (QKLQHLEHVMENYTQWLQKLENYIVENMKSEMAQIQQNA) form a coiled coil. N92, N122, N154, N243, and N295 each carry an N-linked (GlcNAc...) asparagine glycan. A coiled-coil region spans residues 153–261 (LNQTSRLEIQ…LELMDTVHNL (109 aa)). A Fibrinogen C-terminal domain is found at 277–497 (REEEKPFRDC…STTMMIRPLD (221 aa)). 2 disulfides stabilise this stretch: C286–C315 and C439–C452.

As to quaternary structure, homooligomer. Interacts with TEK/TIE2. Interacts with SVEP1/polydom. Interacts with THBD; this interaction significantly inhibits the generation of activated PC and TAFIa/CPB2 by the thrombin/thrombomodulin complex.

The protein localises to the secreted. Its function is as follows. Binds and activates TEK/TIE2 receptor by inducing its dimerization and tyrosine phosphorylation. Plays an important role in the regulation of angiogenesis, endothelial cell survival, proliferation, migration, adhesion and cell spreading, reorganization of the actin cytoskeleton, but also maintenance of vascular quiescence. Required for normal angiogenesis and heart development during embryogenesis. After birth, activates or inhibits angiogenesis, depending on the context. Inhibits angiogenesis and promotes vascular stability in quiescent vessels, where endothelial cells have tight contacts. In quiescent vessels, ANGPT1 oligomers recruit TEK to cell-cell contacts, forming complexes with TEK molecules from adjoining cells, and this leads to preferential activation of phosphatidylinositol 3-kinase and the AKT1 signaling cascades. In migrating endothelial cells that lack cell-cell adhesions, ANGT1 recruits TEK to contacts with the extracellular matrix, leading to the formation of focal adhesion complexes, activation of PTK2/FAK and of the downstream kinases MAPK1/ERK2 and MAPK3/ERK1, and ultimately to the stimulation of sprouting angiogenesis. Mediates blood vessel maturation/stability. Implicated in endothelial developmental processes later and distinct from that of VEGF. Appears to play a crucial role in mediating reciprocal interactions between the endothelium and surrounding matrix and mesenchyme. This Mus musculus (Mouse) protein is Angiopoietin-1 (Angpt1).